A 730-amino-acid polypeptide reads, in one-letter code: Neuroligin-like protein glit-1 (730 aa).

Positions 1 to 18 (MFTGTIFNSLFTLPLVIS) are cleaved as a signal peptide. Topologically, residues 19-663 (QFVPPPTRPV…EIMVFKWITG (645 aa)) are extracellular. N103, N320, N445, N512, N557, N564, and N604 each carry an N-linked (GlcNAc...) asparagine glycan. Residues 664-684 (VNVIIIALLIVLAGAFGYMVW) form a helical membrane-spanning segment. Over 685–730 (GNKEDEEAAYKAENHQLVEYRDTGHSVSDATISSRTRSPRSRITNL) the chain is Cytoplasmic.

It belongs to the type-B carboxylesterase/lipase family. In terms of tissue distribution, expressed in the pharynx, intestine, and in several cells in the head including dopaminergic neurons.

Its subcellular location is the cell membrane. Probable neuronal cell surface protein thought to be involved in cell-cell-interactions. Confers protection against oxidative stress. Plays a role in protecting dopaminergic neurons against oxidative stress-induced neurodegeneration. In Caenorhabditis elegans, this protein is Neuroligin-like protein glit-1.